A 66-amino-acid chain; its full sequence is Large ribosomal subunit protein uL30 (66 aa).

The protein belongs to the universal ribosomal protein uL30 family. As to quaternary structure, part of the 50S ribosomal subunit.

This chain is Large ribosomal subunit protein uL30, found in Chelativorans sp. (strain BNC1).